We begin with the raw amino-acid sequence, 680 residues long: DNA-directed RNA polymerase subunit beta' (680 aa).

Zn(2+) is bound by residues C69, C71, C87, and C90. Residues D489, D491, and D493 each coordinate Mg(2+).

This sequence belongs to the RNA polymerase beta' chain family. RpoC1 subfamily. In plastids the minimal PEP RNA polymerase catalytic core is composed of four subunits: alpha, beta, beta', and beta''. When a (nuclear-encoded) sigma factor is associated with the core the holoenzyme is formed, which can initiate transcription. Mg(2+) serves as cofactor. It depends on Zn(2+) as a cofactor.

It localises to the plastid. The protein resides in the chloroplast. The enzyme catalyses RNA(n) + a ribonucleoside 5'-triphosphate = RNA(n+1) + diphosphate. DNA-dependent RNA polymerase catalyzes the transcription of DNA into RNA using the four ribonucleoside triphosphates as substrates. This Lepidium virginicum (Virginia pepperweed) protein is DNA-directed RNA polymerase subunit beta'.